Consider the following 1136-residue polypeptide: Solute carrier family 12 member 2 (1136 aa).

Disordered regions lie at residues 1–73 (MSAS…SVSG) and 91–121 (PDAAPAETAQNGDTVMSEGSLHSSTGGQQHH). Residues 1 to 208 (MSASPPISAG…SESKGVVKFG (208 aa)) are Cytoplasmic-facing. A phosphothreonine mark is found at Thr125, Thr129, Thr134, Thr139, and Thr152. Residues 209–234 (WIKGVLVRCMLNIWGVMLFIRMTWIV) traverse the membrane as a discontinuously helical segment. Na(+) is bound at residue Leu219. Residues Asn220 and Ile221 each coordinate K(+). A Na(+)-binding site is contributed by Trp222. Chloride contacts are provided by Gly223, Val224, and Met225. The Extracellular portion of the chain corresponds to 235-238 (GQAG). A helical membrane pass occupies residues 239–261 (IAYSCIIVIMATVVTTITGCSTS). Residues 262–285 (AIATNGFVRGGGAYYLISRSLGPE) lie on the Cytoplasmic side of the membrane. The helical transmembrane segment at 286–314 (FGGSIGLIFAFANAVAVAMYVVGFAETVV) threads the bilayer. A chloride-binding site is contributed by Phe294. Residue Tyr305 coordinates K(+). Residues 315 to 327 (ELLMDSGLLMIDQ) are Extracellular-facing. The next 2 membrane-spanning stretches (helical) occupy residues 328 to 351 (TNDIRVIGTITVILLLGISVAGME) and 352 to 376 (WEAKAQIFLLVILITAIFNYFIGSF). Topologically, residues 377 to 407 (IAVDSKKKFGFFSYDAGILAENFGPDFRGQT) are extracellular. A discontinuously helical membrane pass occupies residues 408–427 (FFSVFSIFFPAATGILAGAN). K(+)-binding residues include Pro417, Ala418, and Thr420. Pro417 and Ala418 together coordinate chloride. Residues Gly421 and Ile422 each contribute to the chloride site. Residues 428–438 (ISGDLADPQMA) are Cytoplasmic-facing. The helical transmembrane segment at 439–462 (IPKGTLLAILITGLVYVGVAISAG) threads the bilayer. The Extracellular portion of the chain corresponds to 463–523 (ACIVRDATGI…DFQVMSVVSG (61 aa)). Asn475 and Asn481 each carry an N-linked (GlcNAc...) asparagine glycan. Cys496 and Cys507 are disulfide-bonded. The chain crosses the membrane as a helical span at residues 524-551 (FSPLISAGIFSATLSSALASLVSAPKVF). Ala535, Ser538, and Ser539 together coordinate Na(+). Residues 552–576 (QALCKDNIYPGIAIFGKGYGKNNEP) are Cytoplasmic-facing. The next 2 helical transmembrane spans lie at 577 to 595 (LRGYFLTFGIALAFILIAE) and 596 to 619 (LNVIAPIISNFFLASYALINFSVF). Chloride-binding residues include Phe607 and Tyr611. The Cytoplasmic portion of the chain corresponds to 620–636 (HASLANSPGWRPSFKYY). 2 helical membrane passes run 637–656 (NMWASLAGAILCCVVMFIIN) and 657–672 (WWAALLTNVIVLSLYI). Topologically, residues 673 to 1136 (YVSYKKPDVN…NHQSVLTFYS (464 aa)) are cytoplasmic. A scissor helix region spans residues 689–702 (ALTYHQALTHSLQL). The interval 875–921 (SKDSDGDSSKPSSKATSVQNSPAVQKDEDDDGKAHTQPLLKKDKKSP) is disordered. Position 1059 is a phosphothreonine (Thr1059).

It belongs to the SLC12A transporter family. Homodimer; adopts a domain-swap conformation at the scissor helices connecting the transmembrane domain and C-terminal domain. Post-translationally, phosphorylated at Thr-125, Thr-129 and Thr-134 by OXSR1/OSR1 and STK39/SPAK downstream of WNK kinases (WNK1, WNK2, WNK3 or WNK4), promoting its activity.

The protein localises to the basolateral cell membrane. The enzyme catalyses K(+)(out) + 2 chloride(out) + Na(+)(out) = K(+)(in) + 2 chloride(in) + Na(+)(in). Activated following phosphorylation by OXSR1/OSR1 and STK39/SPAK. Inhibited by bumetanide. In terms of biological role, cation-chloride cotransporter which mediates the electroneutral transport of chloride, potassium and/or sodium ions across the membrane. Plays a vital role in the regulation of ionic balance and cell volume. Important for maintenance of endolymph volume in the otic vesicle, probably by regulating ion homeostasis. Also plays a role in normal development of the swim bladder. The chain is Solute carrier family 12 member 2 from Danio rerio (Zebrafish).